Reading from the N-terminus, the 1251-residue chain is DNA repair protein REV1 (1251 aa).

A BRCT domain is found at 44–131 (TSSTIFSGVA…RLLSYIPYQL (88 aa)). Disordered regions lie at residues 206-236 (TSPG…NGAL) and 282-342 (STRN…VPSK). The segment covering 282-320 (STRNTDALRNPHRTNSFSLSPLHSNTKINGAHHSTVQGP) has biased composition (polar residues). A compositionally biased stretch (low complexity) spans 321–342 (SSTKSTSSVSTFSKAAPSVPSK). An interaction with target DNA region spans residues 352–362 (FYSHSRLHHIS). Residues Arg357, 423 to 427 (DMDCF), 510 to 516 (SCSYEAR), Asn522, and Asp570 each bind dCTP. In terms of domain architecture, UmuC spans 419–653 (IMHVDMDCFF…QLVTNLPGVG (235 aa)). Asp423 contacts Mg(2+). Mg(2+) is bound by residues Asp570 and Glu571. Interaction with target DNA regions lie at residues 653-656 (GHSM) and 709-717 (RKSVSAEIN). Disordered stretches follow at residues 1035–1096 (AYDQ…KLLN) and 1119–1147 (HEGP…LQSD). A compositionally biased stretch (polar residues) spans 1043 to 1056 (GENSTHQQSASASV). Positions 1070–1079 (EKKRNKKKKT) are enriched in basic residues. The Nuclear localization signal motif lies at 1071 to 1078 (KKRNKKKK). Basic and acidic residues predominate over residues 1119–1129 (HEGPPAEKPLE). The span at 1132–1146 (SASTSGVPGLSSLQS) shows a compositional bias: polar residues. The tract at residues 1150 to 1249 (GCVRPPAPNL…LQQTYGSTLK (100 aa)) is protein interaction domain; mediates interaction with DNA polymerase zeta.

Belongs to the DNA polymerase type-Y family. As to quaternary structure, monomer. Interacts with the DNA polymerase zeta which is composed of REV3L and MAD2L2; the interaction with MAD2L2 is direct and requires that REV3L is in its closed conformation. Interacts with POLH, POLI and POLK. May bind ITGA3. Interacts with FAAP20/C1orf86. As to expression, ubiquitous.

It is found in the nucleus. Deoxycytidyl transferase involved in DNA repair. Transfers a dCMP residue from dCTP to the 3'-end of a DNA primer in a template-dependent reaction. May assist in the first step in the bypass of abasic lesions by the insertion of a nucleotide opposite the lesion. Required for normal induction of mutations by physical and chemical agents. The protein is DNA repair protein REV1 (REV1) of Homo sapiens (Human).